The chain runs to 478 residues: Sodium-dependent phosphate transport protein 3 (478 aa).

4 N-linked (GlcNAc...) asparagine glycosylation sites follow: Asn28, Asn47, Asn56, and Asn69. A run of 10 helical transmembrane segments spans residues 98–118 (ISYGIILTLIPSGYLAGIFGA), 130–150 (SLLTLFTPLAADFGVILVIVI), 183–203 (SIAGSGAAFGSFIILCVGGLI), 211–231 (FIFYIFGSIGCVCCVLWFTVI), 273–293 (LPLWAIFMGFFSHFWLCTIII), 317–337 (LPFIAASSCTILGGQMADFLL), 341–361 (LLSLITVRKLFSSLGLLLPSL), 363–383 (AVALPFVTSSYIATIVLLILI), 405–425 (YASFLMGISRGFGLTAGIISS), and 442–462 (NVFFLSAAVNMFGLIFYLIFG).

It belongs to the major facilitator superfamily. Sodium/anion cotransporter family. As to expression, expressed in the liver, kidney, placenta, lung and thyroid (at protein level).

The protein localises to the apical cell membrane. The catalysed reaction is 3 Na(+)(out) + phosphate(out) = 3 Na(+)(in) + phosphate(in). It carries out the reaction urate(out) + n chloride(in) = urate(in) + n chloride(out). Acts as a membrane potential-dependent organic anion transporter, the transport requires a low concentration of chloride ions. Mediates chloride-dependent transport of urate. Can actively transport inorganic phosphate into cells via Na(+) cotransport. The chain is Sodium-dependent phosphate transport protein 3 (Slc17a2) from Mus musculus (Mouse).